Consider the following 491-residue polypeptide: MNTQQLAKLRSIVPEMRRVRHIHFVGIGGAGMGGIAEVLANEGYQISGSDLAPNPVTQQLTSLGATIFFNHRPENVRDASVVVVSSAISADNPEIVAAHEARIPVIRRAEMLAELMRFRHGIAIAGTHGKTTTTAMVSSIYAEAGLDPTFVNGGLVKAAGVHARLGHSRYLIAEADESDASFLHLQPMVAIVTNIEADHMDTYHGDFENLKQTFINFLHNLPFYGRAVMCVDDPVIRELLPRVGRQTTTYGFSDDADVRVEDYQQIGPQGHFTLLRQGMPDLRVTLNAPGRHNALNATAAVAVATEEGIDDDAILRALESFQGTGRRFDFLGEFPLEPVNGKSGTAMLVDDYGHHPTEVDATIKAARAGWPDKNLVMLFQPHRYTRTRDLYDDFANVLTQVDALLMLDVYPAGETPIPGADSRSLCRTIRNRGKIDPILVSDPAQIATILAPVLTGNDLILVQGAGNVGKIARYLSEIKLKPQTQEEEQHG.

126–132 is a binding site for ATP; the sequence is GTHGKTT.

This sequence belongs to the MurCDEF family.

The protein resides in the cytoplasm. It carries out the reaction UDP-N-acetyl-alpha-D-muramate + L-alanine + ATP = UDP-N-acetyl-alpha-D-muramoyl-L-alanine + ADP + phosphate + H(+). The protein operates within cell wall biogenesis; peptidoglycan biosynthesis. Cell wall formation. The sequence is that of UDP-N-acetylmuramate--L-alanine ligase from Salmonella arizonae (strain ATCC BAA-731 / CDC346-86 / RSK2980).